A 630-amino-acid chain; its full sequence is UvrABC system protein C (630 aa).

A disordered region spans residues 1–96 (MGAEGLQGEG…GEAHRRGGTG (96 aa)). Residues 9–28 (EGEVPPQGAGVPGQVQVGVH) show a composition bias toward low complexity. A GIY-YIG domain is found at 52-125 (DPRGLPVEAG…IKAHRPLYNV (74 aa)). The segment covering 75–91 (RPGEKLLPRRGQGEAHR) has biased composition (basic and acidic residues). A UVR domain is found at 234–269 (DGLLQELEAKMREAARRLEFERAAEIRDQMEALRAF).

Belongs to the UvrC family. Interacts with UvrB in an incision complex.

Its subcellular location is the cytoplasm. In terms of biological role, the UvrABC repair system catalyzes the recognition and processing of DNA lesions. UvrC both incises the 5' and 3' sides of the lesion. The N-terminal half is responsible for the 3' incision and the C-terminal half is responsible for the 5' incision. This is UvrABC system protein C from Thermus thermophilus (strain ATCC BAA-163 / DSM 7039 / HB27).